The sequence spans 348 residues: 5-deoxyribose 1-phosphate isomerase (348 aa).

Substrate-binding positions include 49-51, arginine 92, and glutamine 199; that span reads RGA. Aspartate 240 acts as the Proton donor in catalysis. 250–251 provides a ligand contact to substrate; the sequence is NK.

Belongs to the EIF-2B alpha/beta/delta subunits family. DrdI subfamily. As to quaternary structure, homodimer.

It catalyses the reaction 5-deoxy-alpha-D-ribose 1-phosphate = 5-deoxy-D-ribulose 1-phosphate. The enzyme catalyses 5-(methylsulfanyl)-alpha-D-ribose 1-phosphate = 5-(methylsulfanyl)-D-ribulose 1-phosphate. The protein operates within carbohydrate degradation. Catalyzes the isomerization of 5-deoxy-alpha-D-ribose 1-phosphate to 5-deoxy-D-ribulose 1-phosphate, as part of a 5-deoxyribose salvage pathway that recycles this toxic radical SAM enzyme by-product to mainstream metabolites. Also seems to be able to catalyze the conversion of methylthioribose-1-phosphate (MTR-1-P) into methylthioribulose-1-phosphate (MTRu-1-P). However this enzyme may not function in methionine salvage in B.thuringiensis since it exists a paralog (MtnA) present in the methionine salvage pathway cluster. In Bacillus thuringiensis serovar kurstaki (strain ATCC 35866 / NRRL B-4488 / HD73), this protein is 5-deoxyribose 1-phosphate isomerase.